The following is a 296-amino-acid chain: Arginine/serine-rich protein 1 (296 aa).

The tract at residues 1–131 is disordered; sequence MSNYVNDMWP…RSRSRSRERS (131 aa). Phosphoserine is present on S12. The span at 20–31 shows a compositional bias: low complexity; it reads SASRSGGSSRLS. The segment covering 32-125 has biased composition (basic residues); it reads SRSRSRSFSR…RSRSRSRSRS (94 aa). Residues S111 and S113 each carry the phosphoserine modification. An Omega-N-methylarginine modification is found at R141. Basic and acidic residues predominate over residues 156-165; the sequence is ERSRWRDRSR. Disordered regions lie at residues 156-175 and 217-296; these read ERSRWRDRSRTRSRSRTPFR and SHGI…WIPV. Positions 245–261 are enriched in polar residues; the sequence is EKPSQQRSIAFSSNNSV. The segment covering 272-287 has biased composition (basic and acidic residues); sequence ATEETSSRSPKIDKKK. At S280 the chain carries Phosphoserine.

Belongs to the RSRP family. Phosphorylated. Phosphorylation at Ser-111 and Ser-113 mediates the interaction with spliceosome proteins.

It localises to the nucleus. In terms of biological role, probably acts as a spliceosomal factor that contributes to spliceosome assembly and regulates the isoform switching of proteins such as PARP6. This Macaca fascicularis (Crab-eating macaque) protein is Arginine/serine-rich protein 1 (RSRP1).